We begin with the raw amino-acid sequence, 496 residues long: N-acetylmuramoyl-L-alanine amidase LytC (496 aa).

Residues 1–24 (MRSYIKVLTMCFLGLILFVPTALA) form the signal peptide. A run of 3 repeats spans residues 30-128 (RVGG…ISIK), 129-222 (RIAG…PSPT), and 223-318 (RISG…NPVV). Residues 30-318 (RVGGSNRYGT…VANQLKNPVV (289 aa)) form a 3 X tandem repeats region. The MurNAc-LAA domain maps to 322-490 (IFIDPGHGDQ…DKAAQAIHDG (169 aa)).

It belongs to the N-acetylmuramoyl-L-alanine amidase 3 family.

It is found in the secreted. The protein resides in the cell wall. The enzyme catalyses Hydrolyzes the link between N-acetylmuramoyl residues and L-amino acid residues in certain cell-wall glycopeptides.. In terms of biological role, autolysins are cell wall hydrolases involved in some important biological processes such as cell separation, cell-wall turnover, competence for genetic transformation, formation of the flagella - in particular of its basal body - and sporulation. Has a high affinity for teichoic acid-endowed peptidoglycan. LytC is required for efficient swarming motility but not at the level of cell separation or flagellum biosynthesis. Rather, LytC appears to be important for proper flagellar function. The protein is N-acetylmuramoyl-L-alanine amidase LytC (lytC) of Bacillus subtilis (strain 168).